A 135-amino-acid polypeptide reads, in one-letter code: Retinol-binding protein 1 (135 aa).

Residues 22 to 32 are important for interaction with STRA6; the sequence is RALDVNVALRK. 3 residues coordinate all-trans-retinol: lysine 41, methionine 63, and glutamine 109.

This sequence belongs to the calycin superfamily. Fatty-acid binding protein (FABP) family. As to quaternary structure, interacts (only as retinol-free apoprotein) with STRA6.

The protein localises to the cytoplasm. Its subcellular location is the lipid droplet. Cytoplasmic retinol-binding protein. Accepts retinol from the transport protein STRA6, and thereby contributes to retinol uptake, storage and retinoid homeostasis. This chain is Retinol-binding protein 1 (RBP1), found in Bos taurus (Bovine).